A 192-amino-acid chain; its full sequence is Guanylate kinase (192 aa).

The Guanylate kinase-like domain occupies 7–185 (GLIIILSSPS…TLKKIHEIIV (179 aa)). 14-21 (SPSGTGKS) contributes to the ATP binding site.

Belongs to the guanylate kinase family.

It is found in the cytoplasm. The catalysed reaction is GMP + ATP = GDP + ADP. Essential for recycling GMP and indirectly, cGMP. The chain is Guanylate kinase from Rickettsia felis (strain ATCC VR-1525 / URRWXCal2) (Rickettsia azadi).